We begin with the raw amino-acid sequence, 265 residues long: Tryptophan synthase alpha chain (265 aa).

Residues Glu-49 and Asp-60 each act as proton acceptor in the active site.

It belongs to the TrpA family. In terms of assembly, tetramer of two alpha and two beta chains.

It carries out the reaction (1S,2R)-1-C-(indol-3-yl)glycerol 3-phosphate + L-serine = D-glyceraldehyde 3-phosphate + L-tryptophan + H2O. It participates in amino-acid biosynthesis; L-tryptophan biosynthesis; L-tryptophan from chorismate: step 5/5. In terms of biological role, the alpha subunit is responsible for the aldol cleavage of indoleglycerol phosphate to indole and glyceraldehyde 3-phosphate. This chain is Tryptophan synthase alpha chain, found in Paracoccus denitrificans (strain Pd 1222).